Here is a 298-residue protein sequence, read N- to C-terminus: MAITAQMVKELRESTGAGMMDAKKALTETDGDMEAAVDWLRTKGLAKAAKKAGRTAAEGLVGVAVSGGTGVAVEVNSETDFVAKNADFQTMVTGFTQAALSVDDVEALKAADMGGKTVETTLQETIAVIGENMTLRRMAKISGDSVAAYVHNAAADGLGKIGVLVAVKGADNGIAKQIAMHIAATSPMALSEADLDPTLVERERAVQTQKALEENAASAKPKPDSVIENNIIPGRMKKFLEENTLLGQKFVINPDVTVAEAAKQAGVEILGFVRMAVGEGIEKEKEDFAAEVAKTLAG.

Positions 79–82 (TDFV) are involved in Mg(2+) ion dislocation from EF-Tu.

It belongs to the EF-Ts family.

The protein localises to the cytoplasm. Functionally, associates with the EF-Tu.GDP complex and induces the exchange of GDP to GTP. It remains bound to the aminoacyl-tRNA.EF-Tu.GTP complex up to the GTP hydrolysis stage on the ribosome. The sequence is that of Elongation factor Ts from Cereibacter sphaeroides (strain ATCC 17025 / ATH 2.4.3) (Rhodobacter sphaeroides).